The sequence spans 344 residues: MNQTVSLQQLADKIGASLHLTDGDSGETQIHSLSTLASAGNGQISFLSNSRYRSQLEKTAAQAVILKSEDLSHCQCSALVMDNPYVGFALAAQLLDSTPRSADGISPLAVIADDVELGDNVSIGAHAVIESGVKLADNVQIGPGCFIGKEVSVGANTKLWANVTLYHRVVLGQDCLIQSATVIGADGFGYANDKGRWVKIPQLGTVILGDRVEVGASSTIDRGALDDTIIGNGVIIDNQCQVAHNVIIGENTAIAGCTVVAGSVTIGRNCTIGGMVAINGHMEICDNVYITGMSMVTKAIDKPGVYSSGMPAIENREWRKNAVALRNLSTLNQRVKTLEKSHLK.

H244 functions as the Proton acceptor in the catalytic mechanism.

Belongs to the transferase hexapeptide repeat family. LpxD subfamily. In terms of assembly, homotrimer.

The enzyme catalyses a UDP-3-O-[(3R)-3-hydroxyacyl]-alpha-D-glucosamine + a (3R)-hydroxyacyl-[ACP] = a UDP-2-N,3-O-bis[(3R)-3-hydroxyacyl]-alpha-D-glucosamine + holo-[ACP] + H(+). It participates in bacterial outer membrane biogenesis; LPS lipid A biosynthesis. Its function is as follows. Catalyzes the N-acylation of UDP-3-O-acylglucosamine using 3-hydroxyacyl-ACP as the acyl donor. Is involved in the biosynthesis of lipid A, a phosphorylated glycolipid that anchors the lipopolysaccharide to the outer membrane of the cell. In Pseudoalteromonas atlantica (strain T6c / ATCC BAA-1087), this protein is UDP-3-O-acylglucosamine N-acyltransferase.